The sequence spans 480 residues: Proline--tRNA ligase (480 aa).

The protein belongs to the class-II aminoacyl-tRNA synthetase family. ProS type 3 subfamily. As to quaternary structure, homodimer.

It is found in the cytoplasm. It carries out the reaction tRNA(Pro) + L-proline + ATP = L-prolyl-tRNA(Pro) + AMP + diphosphate. In terms of biological role, catalyzes the attachment of proline to tRNA(Pro) in a two-step reaction: proline is first activated by ATP to form Pro-AMP and then transferred to the acceptor end of tRNA(Pro). This is Proline--tRNA ligase from Chloroflexus aurantiacus (strain ATCC 29364 / DSM 637 / Y-400-fl).